An 823-amino-acid polypeptide reads, in one-letter code: Zygotic DNA replication licensing factor mcm6 (823 aa).

The C4-type zinc finger occupies 159–186 (CLDCQTLVRDVEQQFKYTQPSICRNPVC). In terms of domain architecture, MCM spans 347-554 (LYHNLCTSLF…TDYAIARRIV (208 aa)). 397-404 (GDPSTAKS) serves as a coordination point for ATP. The Arginine finger signature appears at 529–532 (SRFD). The tract at residues 666–713 (NLDQEDEHEAEEEPQEVINGDASVPSGVNGHVNGMNGHAEEPNAATPK) is disordered. A compositionally biased stretch (acidic residues) spans 667–680 (LDQEDEHEAEEEPQ). Low complexity predominate over residues 692–702 (GVNGHVNGMNG).

The protein belongs to the MCM family. Component of the mcm2-7 complex (RLF-M). The complex forms a toroidal hexameric ring with the proposed subunit order mcm2-mcm6-mcm4-mcm7-mcm3-mcm5. Begins to associate with zmcm3, mcm4 and mcm7 into mcm complexes at the neurula stage.

It is found in the nucleus. It carries out the reaction ATP + H2O = ADP + phosphate + H(+). Functionally, acts as a component of the mcm2-7 complex (mcm complex) which is the putative replicative helicase essential for 'once per cell cycle' DNA replication initiation and elongation in eukaryotic cells. The active ATPase sites in the mcm2-7 ring are formed through the interaction surfaces of two neighboring subunits such that a critical structure of a conserved arginine finger motif is provided in trans relative to the ATP-binding site of the Walker A box of the adjacent subunit. The six ATPase active sites, however, are likely to contribute differentially to the complex helicase activity. The existence of maternal and zygotic forms of mcm3 and mcm6 suggests that specific forms of mcm2-7 complexes may be used during different stages of development. May replace mmcm6 in the mcm2-7 complex. The chain is Zygotic DNA replication licensing factor mcm6 from Xenopus tropicalis (Western clawed frog).